Here is a 226-residue protein sequence, read N- to C-terminus: Leucyl/phenylalanyl-tRNA--protein transferase (226 aa).

It belongs to the L/F-transferase family.

The protein resides in the cytoplasm. The catalysed reaction is N-terminal L-lysyl-[protein] + L-leucyl-tRNA(Leu) = N-terminal L-leucyl-L-lysyl-[protein] + tRNA(Leu) + H(+). The enzyme catalyses N-terminal L-arginyl-[protein] + L-leucyl-tRNA(Leu) = N-terminal L-leucyl-L-arginyl-[protein] + tRNA(Leu) + H(+). It carries out the reaction L-phenylalanyl-tRNA(Phe) + an N-terminal L-alpha-aminoacyl-[protein] = an N-terminal L-phenylalanyl-L-alpha-aminoacyl-[protein] + tRNA(Phe). Functions in the N-end rule pathway of protein degradation where it conjugates Leu, Phe and, less efficiently, Met from aminoacyl-tRNAs to the N-termini of proteins containing an N-terminal arginine or lysine. The chain is Leucyl/phenylalanyl-tRNA--protein transferase from Ectopseudomonas mendocina (strain ymp) (Pseudomonas mendocina).